We begin with the raw amino-acid sequence, 208 residues long: Holliday junction branch migration complex subunit RuvA (208 aa).

The tract at residues 1-64 is domain I; the sequence is MIGKLKGIVD…EDMIRLYGFR (64 aa). Positions 65–143 are domain II; it reads VDAEREWFRL…AFAPIDPALI (79 aa). Residues 144-152 form a flexible linker region; sequence ALTGAVEDR. Positions 153-208 are domain III; sequence TAPQPVADAISALVNLGYAQIQASAAIAAALKGLGEEAGTVEAKTLIRLGLRELAR.

Belongs to the RuvA family. Homotetramer. Forms an RuvA(8)-RuvB(12)-Holliday junction (HJ) complex. HJ DNA is sandwiched between 2 RuvA tetramers; dsDNA enters through RuvA and exits via RuvB. An RuvB hexamer assembles on each DNA strand where it exits the tetramer. Each RuvB hexamer is contacted by two RuvA subunits (via domain III) on 2 adjacent RuvB subunits; this complex drives branch migration. In the full resolvosome a probable DNA-RuvA(4)-RuvB(12)-RuvC(2) complex forms which resolves the HJ.

It localises to the cytoplasm. The RuvA-RuvB-RuvC complex processes Holliday junction (HJ) DNA during genetic recombination and DNA repair, while the RuvA-RuvB complex plays an important role in the rescue of blocked DNA replication forks via replication fork reversal (RFR). RuvA specifically binds to HJ cruciform DNA, conferring on it an open structure. The RuvB hexamer acts as an ATP-dependent pump, pulling dsDNA into and through the RuvAB complex. HJ branch migration allows RuvC to scan DNA until it finds its consensus sequence, where it cleaves and resolves the cruciform DNA. This is Holliday junction branch migration complex subunit RuvA from Methylorubrum extorquens (strain CM4 / NCIMB 13688) (Methylobacterium extorquens).